Reading from the N-terminus, the 509-residue chain is Maturase K (509 aa).

This sequence belongs to the intron maturase 2 family. MatK subfamily.

Its subcellular location is the plastid. The protein resides in the chloroplast. In terms of biological role, usually encoded in the trnK tRNA gene intron. Probably assists in splicing its own and other chloroplast group II introns. The protein is Maturase K of Pereskia aculeata (Barbados gooseberry).